The chain runs to 1072 residues: DNA-directed RNA polymerase subunit beta (1072 aa).

This sequence belongs to the RNA polymerase beta chain family. In plastids the minimal PEP RNA polymerase catalytic core is composed of four subunits: alpha, beta, beta', and beta''. When a (nuclear-encoded) sigma factor is associated with the core the holoenzyme is formed, which can initiate transcription.

It is found in the plastid. The protein localises to the chloroplast. It carries out the reaction RNA(n) + a ribonucleoside 5'-triphosphate = RNA(n+1) + diphosphate. DNA-dependent RNA polymerase catalyzes the transcription of DNA into RNA using the four ribonucleoside triphosphates as substrates. The sequence is that of DNA-directed RNA polymerase subunit beta from Amborella trichopoda.